A 127-amino-acid chain; its full sequence is Nuclear transport factor 2 (127 aa).

Residues Val11–Leu124 enclose the NTF2 domain.

It localises to the cytoplasm. Its subcellular location is the cytosol. The protein resides in the nucleus outer membrane. The protein localises to the nucleus. It is found in the nuclear pore complex. It localises to the nucleus inner membrane. Its subcellular location is the nucleoplasm. Its function is as follows. Mediates the import of GDP-bound RAN from the cytoplasm into the nucleus which is essential for the function of RAN in cargo receptor-mediated nucleocytoplasmic transport. Thereby, plays indirectly a more general role in cargo receptor-mediated nucleocytoplasmic transport. Interacts with GDP-bound RAN in the cytosol, recruits it to the nuclear pore complex via its interaction with nucleoporins and promotes its nuclear import. The protein is Nuclear transport factor 2 of Dictyostelium discoideum (Social amoeba).